The primary structure comprises 226 residues: Ribosomal RNA small subunit methyltransferase G (226 aa).

Residues Gly-95, Leu-100, 146-147 (VE), and Arg-159 contribute to the S-adenosyl-L-methionine site.

Belongs to the methyltransferase superfamily. RNA methyltransferase RsmG family.

Its subcellular location is the cytoplasm. The catalysed reaction is guanosine(527) in 16S rRNA + S-adenosyl-L-methionine = N(7)-methylguanosine(527) in 16S rRNA + S-adenosyl-L-homocysteine. Functionally, specifically methylates the N7 position of guanine in position 527 of 16S rRNA. The sequence is that of Ribosomal RNA small subunit methyltransferase G from Acidovorax ebreus (strain TPSY) (Diaphorobacter sp. (strain TPSY)).